Here is a 180-residue protein sequence, read N- to C-terminus: Putative pre-16S rRNA nuclease (180 aa).

A compositionally biased stretch (basic and acidic residues) spans Met1 to Pro12. Residues Met1–Gly23 form a disordered region.

It belongs to the YqgF nuclease family.

Its subcellular location is the cytoplasm. In terms of biological role, could be a nuclease involved in processing of the 5'-end of pre-16S rRNA. The polypeptide is Putative pre-16S rRNA nuclease (Nocardia farcinica (strain IFM 10152)).